A 509-amino-acid chain; its full sequence is ATP synthase subunit alpha, mitochondrial (509 aa).

An ATP-binding site is contributed by 171 to 178 (GDRQTGKT).

The protein belongs to the ATPase alpha/beta chains family. In terms of assembly, F-type ATPases have 2 components, CF(1) - the catalytic core - and CF(0) - the membrane proton channel. CF(1) has five subunits: alpha(3), beta(3), gamma(1), delta(1), epsilon(1). CF(0) has three main subunits: a, b and c.

The protein localises to the mitochondrion. The protein resides in the mitochondrion inner membrane. In terms of biological role, mitochondrial membrane ATP synthase (F(1)F(0) ATP synthase or Complex V) produces ATP from ADP in the presence of a proton gradient across the membrane which is generated by electron transport complexes of the respiratory chain. F-type ATPases consist of two structural domains, F(1) - containing the extramembraneous catalytic core, and F(0) - containing the membrane proton channel, linked together by a central stalk and a peripheral stalk. During catalysis, ATP synthesis in the catalytic domain of F(1) is coupled via a rotary mechanism of the central stalk subunits to proton translocation. Subunits alpha and beta form the catalytic core in F(1). Rotation of the central stalk against the surrounding alpha(3)beta(3) subunits leads to hydrolysis of ATP in three separate catalytic sites on the beta subunits. Subunit alpha does not bear the catalytic high-affinity ATP-binding sites. The protein is ATP synthase subunit alpha, mitochondrial (ATPA) of Oryza sativa subsp. indica (Rice).